The primary structure comprises 311 residues: Porphobilinogen deaminase (311 aa).

Cysteine 242 bears the S-(dipyrrolylmethanemethyl)cysteine mark.

This sequence belongs to the HMBS family. As to quaternary structure, monomer. It depends on dipyrromethane as a cofactor.

The enzyme catalyses 4 porphobilinogen + H2O = hydroxymethylbilane + 4 NH4(+). Its pathway is porphyrin-containing compound metabolism; protoporphyrin-IX biosynthesis; coproporphyrinogen-III from 5-aminolevulinate: step 2/4. Tetrapolymerization of the monopyrrole PBG into the hydroxymethylbilane pre-uroporphyrinogen in several discrete steps. This Baumannia cicadellinicola subsp. Homalodisca coagulata protein is Porphobilinogen deaminase.